Reading from the N-terminus, the 685-residue chain is Probable inactive leucine-rich repeat receptor-like protein kinase At1g66830 (685 aa).

Residues 1–21 form the signal peptide; the sequence is MSQLFLILCFILTHFFAIATS. The Extracellular portion of the chain corresponds to 22–305; the sequence is LNDQGLALLS…RRANHHSRLC (284 aa). N-linked (GlcNAc...) asparagine glycans are attached at residues asparagine 38 and asparagine 48. 8 LRR repeats span residues 65-89, 90-113, 115-136, 137-161, 162-185, 186-210, 212-234, and 235-260; these read DMRVVSIRLPNKRLSGSLDPSIGSL, LSLRHINLRDNDFQGKLPVELFGL, GLQSLVLSGNSFSGFVPEEIGS, LKSLMTLDLSENSFNGSISLSLIPC, KKLKTLVLSKNSFSGDLPTGLGSN, LVHLRTLNLSFNRLTGTIPEDVGSL, NLKGTLDLSHNFFSGMIPTSLGN, and LPELLYVDLSYNNLSGPIPKFNVLLN. N-linked (GlcNAc...) asparagine glycosylation occurs at asparagine 151. The N-linked (GlcNAc...) asparagine glycan is linked to asparagine 193. Asparagine 247 is a glycosylation site (N-linked (GlcNAc...) asparagine). The chain crosses the membrane as a helical span at residues 306-326; the sequence is IILTATGGTVAGIIFLASLFI. The Cytoplasmic segment spans residues 327-685; sequence YYLRKASARA…ESFEKLVTSI (359 aa). The Protein kinase domain occupies 397–682; the sequence is KASAFLLGKS…SVLESFEKLV (286 aa). Phosphoserine is present on residues serine 399, serine 480, and serine 590.

Belongs to the protein kinase superfamily. Ser/Thr protein kinase family.

The protein localises to the cell membrane. This Arabidopsis thaliana (Mouse-ear cress) protein is Probable inactive leucine-rich repeat receptor-like protein kinase At1g66830.